The chain runs to 79 residues: Conotoxin ArMKLT2-031 (79 aa).

An N-terminal signal peptide occupies residues methionine 1–glycine 22. Residues glutamate 23–arginine 46 constitute a propeptide that is removed on maturation. Glutamine 47 is subject to Pyrrolidone carboxylic acid. 3 cysteine pairs are disulfide-bonded: cysteine 48–cysteine 62, cysteine 55–cysteine 66, and cysteine 61–cysteine 73.

It belongs to the conotoxin O1 superfamily. As to expression, expressed by the venom duct.

Its subcellular location is the secreted. This Conus arenatus (Sand-dusted cone) protein is Conotoxin ArMKLT2-031.